Here is a 51-residue protein sequence, read N- to C-terminus: UPF0391 membrane protein Psyc_0130 (51 aa).

2 helical membrane-spanning segments follow: residues 6–26 (IIFA…VAGL) and 28–47 (ANFA…VAFV).

It belongs to the UPF0391 family.

It localises to the cell membrane. This Psychrobacter arcticus (strain DSM 17307 / VKM B-2377 / 273-4) protein is UPF0391 membrane protein Psyc_0130.